We begin with the raw amino-acid sequence, 529 residues long: Probable DNA helicase MPN_340 (529 aa).

One can recognise a UvrD-like helicase ATP-binding domain in the interval 2–285 (EHLNQEQKAA…FYTTQNYRSI (284 aa)). 23–30 (SGAGTGKT) serves as a coordination point for ATP.

Belongs to the helicase family. UvrD subfamily.

It carries out the reaction Couples ATP hydrolysis with the unwinding of duplex DNA by translocating in the 3'-5' direction.. It catalyses the reaction ATP + H2O = ADP + phosphate + H(+). This Mycoplasma pneumoniae (strain ATCC 29342 / M129 / Subtype 1) (Mycoplasmoides pneumoniae) protein is Probable DNA helicase MPN_340.